A 106-amino-acid polypeptide reads, in one-letter code: Small membrane A-kinase anchor protein (106 aa).

Glycine 2 carries the N-myristoyl glycine lipid modification. Cysteine 3 carries S-palmitoyl cysteine lipidation. A Phosphoserine modification is found at serine 40. Residues 62–85 (ALILEFADRLASEIVEDALQQWAC) form a PKA-RI-binding region. Residue serine 98 is modified to Phosphoserine.

Belongs to the small membrane AKAP family. As to quaternary structure, interacts with PKA type I regulatory subunits PRKAR1A and PRKAR1B. Also binds to type II regulatory subunits, but at a tenfold lower affinity. Post-translationally, may be palmitoylated at Cys-3. As to expression, widely expressed, with very low levels in spleen and liver.

Its subcellular location is the cell membrane. In terms of biological role, binds to type I regulatory subunits of protein kinase A (PKA-RI) and may anchor/target them to the plasma membrane. The polypeptide is Small membrane A-kinase anchor protein (Mus musculus (Mouse)).